Reading from the N-terminus, the 124-residue chain is Small ribosomal subunit protein uS12 (124 aa).

Residues Met-1–Ala-22 are disordered. At Asp-89 the chain carries 3-methylthioaspartic acid.

It belongs to the universal ribosomal protein uS12 family. In terms of assembly, part of the 30S ribosomal subunit. Contacts proteins S8 and S17. May interact with IF1 in the 30S initiation complex.

Its function is as follows. With S4 and S5 plays an important role in translational accuracy. Functionally, interacts with and stabilizes bases of the 16S rRNA that are involved in tRNA selection in the A site and with the mRNA backbone. Located at the interface of the 30S and 50S subunits, it traverses the body of the 30S subunit contacting proteins on the other side and probably holding the rRNA structure together. The combined cluster of proteins S8, S12 and S17 appears to hold together the shoulder and platform of the 30S subunit. The polypeptide is Small ribosomal subunit protein uS12 (Pseudoalteromonas atlantica (strain T6c / ATCC BAA-1087)).